We begin with the raw amino-acid sequence, 427 residues long: Glutamate-1-semialdehyde 2,1-aminomutase (427 aa).

At lysine 268 the chain carries N6-(pyridoxal phosphate)lysine.

It belongs to the class-III pyridoxal-phosphate-dependent aminotransferase family. HemL subfamily. Requires pyridoxal 5'-phosphate as cofactor.

It is found in the cytoplasm. The enzyme catalyses (S)-4-amino-5-oxopentanoate = 5-aminolevulinate. Its pathway is porphyrin-containing compound metabolism; protoporphyrin-IX biosynthesis; 5-aminolevulinate from L-glutamyl-tRNA(Glu): step 2/2. The chain is Glutamate-1-semialdehyde 2,1-aminomutase from Methanococcus maripaludis (strain C6 / ATCC BAA-1332).